The primary structure comprises 901 residues: Core protein VP3 (901 aa).

This sequence belongs to the orbivirus VP3 family.

The protein localises to the virion. In terms of biological role, the VP3 protein is one of the five proteins (with VP1, VP4, VP6 and VP7) which form the inner capsid of the virus. The chain is Core protein VP3 (Segment-3) from Bluetongue virus 11 (isolate USA) (BTV 11).